Reading from the N-terminus, the 681-residue chain is MDAIRKVYQYAEPNLSLVGWMGFIGFPIYYIVWEFMFPQPYENLPLRILCSVLFFGIIYRNRTPFEWRGFLPAYYQVVTTLCLPCFFFYMLLMNNWSNVWVMSFMSAIFLHILLVHITSVMFVQTFVGIGLATFFAWVAQGFHLELTMDWTHVPIFLFIYLFGNLFYFRNQVEHEAKVSIAKSFGAGIAHEMRNPLSGLLTSIDVIQSVLPNPKEGKKEQYTLSDEDVTLLREVSSDAMKIIHSGNETIDLLLTSIDENRVSRSTFKKHSAQSVVESAIESFSYKRSTDRFAISLDVRSEFDFLGSDTLLKYVMYNLFKNAFHHRSSEDFHIHVTMYSDEFANQIVVTDNGSGIAPEVLQSIFQDFYTTGKSGNYGLGLPFCKKVMRSFGGDIRCQSEVGEWSQFTMTFPTIGSSAVKEIKSELTKLKTILFVSEQNILVSKVTDIARFMRFELTVLDVPAVLKNKEYEFEFDLILIDMESLDASGSHIDKVESLLSFTEARIVYMFEHHPIQRARSVSFEPIWVETQAWLLNTRATIDRLLYDANYVVPSMPAKPLDSTNKRTIMVVDDNESLRKFTAMLLEKQGFEVIQTEDGLQAINALNENNVDLILMDIEMPVMDGVEASRQIRGSNKAYASVPIIAHTGDSSPITLDKIGSSGMSDFIVKPADKNRLFDKIANWI.

4 helical membrane passes run L17–F37, A73–M93, I112–A132, and M148–F168. Residues G187 to G413 enclose the Histidine kinase domain. H190 is subject to Phosphohistidine; by autocatalysis. One can recognise a Response regulatory domain in the interval T564 to I681. Position 613 is a 4-aspartylphosphate (D613).

It is found in the cell membrane. It catalyses the reaction ATP + protein L-histidine = ADP + protein N-phospho-L-histidine.. Its function is as follows. Senses the quorum-sensing autoinducer CAI-1 ((S)-3-hydroxytridecan-4-one) which probably functions as an intragenus signal. The sensory signal is then relayed to LuxU and LuxO. The protein is CAI-1 autoinducer sensor kinase/phosphatase CqsS (cqsS) of Vibrio campbellii (strain ATCC BAA-1116).